The primary structure comprises 146 residues: Snaclec 1 (146 aa).

An N-terminal signal peptide occupies residues 1-23; that stretch reads MGRFIFISFGLLVVFLSLSGTEA. Cystine bridges form between Cys25-Cys36, Cys53-Cys142, and Cys119-Cys134. The C-type lectin domain maps to 32 to 143; the sequence is YEGHCYRVFD…CRNYGHFVCK (112 aa).

The protein belongs to the snaclec family. In terms of assembly, heterodimer; disulfide-linked. As to expression, expressed by the venom gland.

It is found in the secreted. Functionally, interferes with one step of hemostasis (modulation of platelet aggregation, or coagulation cascade, for example). The protein is Snaclec 1 of Bitis arietans (African puff adder).